The primary structure comprises 233 residues: Sugar fermentation stimulation protein homolog (233 aa).

This sequence belongs to the SfsA family.

This Saccharophagus degradans (strain 2-40 / ATCC 43961 / DSM 17024) protein is Sugar fermentation stimulation protein homolog.